We begin with the raw amino-acid sequence, 453 residues long: Aspartate aminotransferase, chloroplastic (453 aa).

The N-terminal 44 residues, 1–44 (MASLMLSLGSTSLLPREINKDKLKLGTSASNPFLKAKSFSRVTM), are a transit peptide targeting the chloroplast. The L-aspartate site is built by glycine 85, tryptophan 181, and asparagine 234. Residue lysine 298 is modified to N6-(pyridoxal phosphate)lysine. Arginine 427 lines the L-aspartate pocket.

This sequence belongs to the class-I pyridoxal-phosphate-dependent aminotransferase family. As to quaternary structure, homodimer. Pyridoxal 5'-phosphate is required as a cofactor.

It localises to the plastid. It is found in the chloroplast. The protein localises to the amyloplast. It carries out the reaction L-aspartate + 2-oxoglutarate = oxaloacetate + L-glutamate. In terms of biological role, amino acid aminotransferase important for the metabolism of amino acids and Krebs-cycle related organic acids. No activity with D-Asp or D-Ala as amino donors. In plants, it is involved in nitrogen metabolism and in aspects of carbon and energy metabolism. In Arabidopsis thaliana (Mouse-ear cress), this protein is Aspartate aminotransferase, chloroplastic (ASP5).